The chain runs to 236 residues: Glycoprotein U23 (236 aa).

The N-terminal stretch at 1–17 is a signal peptide; sequence MLFLSFLLVCLCEEVRM. Residues asparagine 67, asparagine 80, and asparagine 103 are each glycosylated (N-linked (GlcNAc...) asparagine; by host). The helical transmembrane segment at 184 to 204 threads the bilayer; sequence LVIWIGGISFIGAFVILIVIL.

The protein localises to the membrane. The polypeptide is Glycoprotein U23 (U23) (Human herpesvirus 6A (strain Uganda-1102) (HHV-6 variant A)).